A 244-amino-acid chain; its full sequence is Small ribosomal subunit protein uS2 (244 aa).

It belongs to the universal ribosomal protein uS2 family.

The sequence is that of Small ribosomal subunit protein uS2 from Psychromonas ingrahamii (strain DSM 17664 / CCUG 51855 / 37).